The primary structure comprises 274 residues: Imidazole glycerol phosphate synthase subunit HisF (274 aa).

Residues Asp11 and Asp134 contribute to the active site.

This sequence belongs to the HisA/HisF family. As to quaternary structure, heterodimer of HisH and HisF.

The protein resides in the cytoplasm. The catalysed reaction is 5-[(5-phospho-1-deoxy-D-ribulos-1-ylimino)methylamino]-1-(5-phospho-beta-D-ribosyl)imidazole-4-carboxamide + L-glutamine = D-erythro-1-(imidazol-4-yl)glycerol 3-phosphate + 5-amino-1-(5-phospho-beta-D-ribosyl)imidazole-4-carboxamide + L-glutamate + H(+). It participates in amino-acid biosynthesis; L-histidine biosynthesis; L-histidine from 5-phospho-alpha-D-ribose 1-diphosphate: step 5/9. Functionally, IGPS catalyzes the conversion of PRFAR and glutamine to IGP, AICAR and glutamate. The HisF subunit catalyzes the cyclization activity that produces IGP and AICAR from PRFAR using the ammonia provided by the HisH subunit. The sequence is that of Imidazole glycerol phosphate synthase subunit HisF from Methanobrevibacter smithii (strain ATCC 35061 / DSM 861 / OCM 144 / PS).